The following is a 532-amino-acid chain: Putative cysteine desulfurase PbSufS (532 aa).

Positions 1-18 (MNNESICILLLLFVKITS) are cleaved as a signal peptide. Residue K286 is modified to N6-(pyridoxal phosphate)lysine. Catalysis depends on C480, which acts as the Cysteine persulfide intermediate.

This sequence belongs to the class-V pyridoxal-phosphate-dependent aminotransferase family. Csd subfamily. Monomer. Interacts with SufE; interaction enhances cysteine desulfurase activity of SufS. Pyridoxal 5'-phosphate is required as a cofactor.

Its subcellular location is the plastid. It is found in the apicoplast. The enzyme catalyses (sulfur carrier)-H + L-cysteine = (sulfur carrier)-SH + L-alanine. Its pathway is cofactor biosynthesis; iron-sulfur cluster biosynthesis. Its function is as follows. Catalyzes sulfur activation and mobilization in sulfur mobilization (SUF) pathway for iron-sulfur (Fe-S) cluster biogenesis. Active when in complex with a partner protein SufE. Required for apicoplast maintenance. Plays a role in the development of sporozoites in oocysts in mosquitoes. The polypeptide is Putative cysteine desulfurase PbSufS (Plasmodium berghei (strain Anka)).